The primary structure comprises 286 residues: Quinone oxidoreductase 2 (286 aa).

Residues 6–11 (GATGQL), Arg-33, 73–75 (SSS), 138–143 (GWYSEN), and Arg-171 contribute to the NADP(+) site.

Belongs to the NmrA-type oxidoreductase family. As to quaternary structure, monomer.

It catalyses the reaction a quinone + NADH + H(+) = a quinol + NAD(+). The enzyme catalyses a quinone + NADPH + H(+) = a quinol + NADP(+). Functionally, quinone oxidoreductase that may play some additional role beyond quinone reduction. Potential redox sensor protein. Overexpression induces retardation of growth. The polypeptide is Quinone oxidoreductase 2 (qorB) (Escherichia coli (strain K12)).